The chain runs to 62 residues: Large ribosomal subunit protein uL29 (62 aa).

This sequence belongs to the universal ribosomal protein uL29 family.

This Enterococcus faecalis (strain ATCC 700802 / V583) protein is Large ribosomal subunit protein uL29.